The primary structure comprises 215 residues: Chloramphenicol acetyltransferase (215 aa).

Residue His189 is the Proton acceptor of the active site.

Belongs to the chloramphenicol acetyltransferase family. As to quaternary structure, homotrimer.

The catalysed reaction is chloramphenicol + acetyl-CoA = chloramphenicol 3-acetate + CoA. In terms of biological role, this enzyme is an effector of chloramphenicol resistance in bacteria. In Staphylococcus intermedius, this protein is Chloramphenicol acetyltransferase (cat).